We begin with the raw amino-acid sequence, 471 residues long: ATP synthase subunit beta (471 aa).

153-160 (GGAGVGKT) contacts ATP.

This sequence belongs to the ATPase alpha/beta chains family. In terms of assembly, F-type ATPases have 2 components, CF(1) - the catalytic core - and CF(0) - the membrane proton channel. CF(1) has five subunits: alpha(3), beta(3), gamma(1), delta(1), epsilon(1). CF(0) has three main subunits: a(1), b(2) and c(9-12). The alpha and beta chains form an alternating ring which encloses part of the gamma chain. CF(1) is attached to CF(0) by a central stalk formed by the gamma and epsilon chains, while a peripheral stalk is formed by the delta and b chains.

It is found in the cell membrane. It carries out the reaction ATP + H2O + 4 H(+)(in) = ADP + phosphate + 5 H(+)(out). Functionally, produces ATP from ADP in the presence of a proton gradient across the membrane. The catalytic sites are hosted primarily by the beta subunits. This Levilactobacillus brevis (strain ATCC 367 / BCRC 12310 / CIP 105137 / JCM 1170 / LMG 11437 / NCIMB 947 / NCTC 947) (Lactobacillus brevis) protein is ATP synthase subunit beta.